Here is an 827-residue protein sequence, read N- to C-terminus: Periplasmic nitrate reductase (827 aa).

The tat-type signal signal peptide spans Met-1 to Ala-33. One can recognise a 4Fe-4S Mo/W bis-MGD-type domain in the interval Ile-37–Asp-93. [4Fe-4S] cluster is bound by residues Cys-44, Cys-47, Cys-51, and Cys-79. Residues Lys-81, Gln-148, Asn-173, Cys-177, Trp-210 to Met-217, Ser-241 to His-245, Gln-260 to Asp-262, Met-370, Gln-374, Asn-480, Ser-506 to Asp-507, Lys-529, Asp-556, and Thr-716 to Thr-725 contribute to the Mo-bis(molybdopterin guanine dinucleotide) site. Phe-792 serves as a coordination point for substrate. Mo-bis(molybdopterin guanine dinucleotide) is bound by residues Asn-800 and Lys-817.

This sequence belongs to the prokaryotic molybdopterin-containing oxidoreductase family. NasA/NapA/NarB subfamily. As to quaternary structure, component of the periplasmic nitrate reductase NapAB complex composed of NapA and NapB. [4Fe-4S] cluster is required as a cofactor. It depends on Mo-bis(molybdopterin guanine dinucleotide) as a cofactor. Post-translationally, predicted to be exported by the Tat system. The position of the signal peptide cleavage has not been experimentally proven.

Its subcellular location is the periplasm. It carries out the reaction 2 Fe(II)-[cytochrome] + nitrate + 2 H(+) = 2 Fe(III)-[cytochrome] + nitrite + H2O. In terms of biological role, catalytic subunit of the periplasmic nitrate reductase complex NapAB. Receives electrons from NapB and catalyzes the reduction of nitrate to nitrite. In Haemophilus influenzae (strain PittEE), this protein is Periplasmic nitrate reductase.